A 317-amino-acid polypeptide reads, in one-letter code: Ribosomal protein L11 methyltransferase (317 aa).

Residues threonine 158, glycine 179, aspartate 201, and asparagine 244 each contribute to the S-adenosyl-L-methionine site.

It belongs to the methyltransferase superfamily. PrmA family.

It localises to the cytoplasm. The catalysed reaction is L-lysyl-[protein] + 3 S-adenosyl-L-methionine = N(6),N(6),N(6)-trimethyl-L-lysyl-[protein] + 3 S-adenosyl-L-homocysteine + 3 H(+). In terms of biological role, methylates ribosomal protein L11. The sequence is that of Ribosomal protein L11 methyltransferase from Streptococcus pyogenes serotype M3 (strain ATCC BAA-595 / MGAS315).